The sequence spans 506 residues: MVTPTKTYRSLAILGTASDVGKSIVATALCRIFRNAGIDVAPYKAQNMSNNSGVTPDGLEIGRAQIAQAEAACVVPTADMNPVLLKPNTDIGAQVVLQGRVCSNESAQGYFRDTSRWAEAARESLLRLKQKHELLVIEGAGSCAEMNLYPRDFVNFRTAREADAAVILVADIDRGGVFAQVVGTLAVIPPEDRALVKGVIINRFRGDSELFREGITMLEEMSGVPVLGVIPYFRHFAIDAEDAVPLSAKVDPAQEPETGKVGVAAIYFPHISNFTDLSPLEHDPSVTLHYLHHPKPLSAYKVLILPGSKNVRGDYAWLQQMGWEKEIRAFREAGGLVIGICGGYQMLGCSIADPYGVEGESGTTQTLGLLETETLLEQEKYLANSEGVLVGTSIKAFGYEIHNGRTTVGANCHPLMNIVARNNHPESDVDGVVSADGRVIGTYFHGIFNEPAVKQWFLQQADSTYTLQPHERGRQESYELLADHFRQHLDVNKLFELIDYEQSLLP.

Residues 260 to 453 form the GATase cobBQ-type domain; sequence KVGVAAIYFP…FHGIFNEPAV (194 aa). Cys341 acts as the Nucleophile in catalysis. His445 is a catalytic residue.

It belongs to the CobB/CobQ family. CobQ subfamily.

It participates in cofactor biosynthesis; adenosylcobalamin biosynthesis. Catalyzes amidations at positions B, D, E, and G on adenosylcobyrinic A,C-diamide. NH(2) groups are provided by glutamine, and one molecule of ATP is hydrogenolyzed for each amidation. The polypeptide is Cobyric acid synthase (Chlorobium chlorochromatii (strain CaD3)).